Here is a 271-residue protein sequence, read N- to C-terminus: MVLIKEFRVVLPCSVQEYQVGQLYSVAEASKNETGGGEGIEVLKNEPYEKDGEKGQYTHKIYHLKSKVPAFVRMIAPEGSLVFHEKAWNAYPYCRTIVTNEYMKDDFFIKIETWHKPDLGTLENVHGLDPNTWKTVEIVHIDIADRSQVEPADYKADEDPALFQSVKTKRGPLGPNWKKELANSPDCPQMCAYKLVTIKFKWWGLQSKVENFIQKQEKRIFTNFHRQLFCWIDKWIDLTMEDIRRMEDETQKELETMRKRGSVRGTSAADV.

K215 bears the N6-acetyllysine mark. A Phosphoserine modification is found at S262.

Belongs to the PtdIns transfer protein family. PI transfer class I subfamily. Post-translationally, constitutive phosphorylation of Ser-262 has no effect on phospholipid transfer activity but is required for Golgi targeting. As to expression, widely expressed in various tissues including brain.

The protein resides in the golgi apparatus. The protein localises to the golgi apparatus membrane. It is found in the endoplasmic reticulum membrane. The enzyme catalyses a 1,2-diacyl-sn-glycero-3-phosphocholine(in) = a 1,2-diacyl-sn-glycero-3-phosphocholine(out). It catalyses the reaction a 1,2-diacyl-sn-glycero-3-phospho-(1D-myo-inositol)(in) = a 1,2-diacyl-sn-glycero-3-phospho-(1D-myo-inositol)(out). The catalysed reaction is an N-(acyl)-sphingosylphosphocholine(in) = an N-(acyl)-sphingosylphosphocholine(out). With respect to regulation, phosphatidylinositol transfer activity is inhibited by N-ethylmaleimide. Functionally, catalyzes the transfer of phosphatidylinositol and phosphatidylcholine between membranes. Also catalyzes the transfer of sphingomyelin. Required for COPI-mediated retrograde transport from the Golgi to the endoplasmic reticulum; phosphatidylinositol and phosphatidylcholine transfer activity is essential for this function. The chain is Phosphatidylinositol transfer protein beta isoform (PITPNB) from Homo sapiens (Human).